A 992-amino-acid polypeptide reads, in one-letter code: MAARWSSENVVVEFRDSQATAMSVDCLGQHAVLSGRRFLYIVNLDAPFEGHRKISRQSKWDIGAVQWNPHDSFAHYFAASSNQRVDLYKWKDGSGEVGTTLQGHTRVISDLDWAVFEPDLLVTSSVDTYIYIWDIKDTRKPTVALSAVAGASQVKWNKKNANYLATSHDGDVRIWDKRKPSTAVEYLAAHLSKIHGLDWHPDSEHIFATSSQDNSVKFWDYRQPRKYLNILPCQVPVWKARYTPFSNGLVTVMVPQLRRENSLLLWNASDLNAPVHTFVGHDDVVLEFQWRRQKEGSKDYQLVTWSRDQTLRMWRVDYQMQRLCANDILDGVDEFIESISLLPEPEKTPHPQDIDHQPSLSHGEEDAIKEDPPSSLLEEKRSDQLGLPQTLQQEFSLINVQIRNVNVEMDAADRSCTVSVHCSNHRVKMLVTFPAQYPNNAAPSFQFINPTTITSAVKAKLLKILKDTSLQKVKRNQSCLEPCLRQLVSCLESFVNQEDSASSNPFALQNSVTPPLPTFARVTTAYGSYQDANIPFPRTSGARFCGAGYLVYFTRPMTMHRAVSPTEPTPRSLSALSAYHTGLIAPMKIRTEAPGNLRLYSGSPTRSEKEQVSISSFYYKERKSRRWKSKREGSDSGNRPIKAAGKVIIQDVSCLLPVHKSLGELYILNVNDTQETCQKNATSAMLVGRKDLVQVWSLATVATDLCLGPKSDPDLETPWARHPFGRQLLESLWGDRESTRVCGPPLSGARLAHYCQLRDVQTLAMLCSVFEAQSRPQGLPNPFGPFPNRSSNLVVSHSRYPSFTSSGSCSSMSDPGFNTGGWNIAGRETEHISSPWGESSPEELRFGSLTYSDPRERERDQHDKNKRLLDPANTQQFDDFKKCYGEILYRWGLREKRAEVLKFVSCPPDPHKGIEFGVYCSHCRSEVRGTQCAICKGFTFQCAICHVAVRGSSNFCLTCGHGGHTSHMMEWFRTQEVCPTGCGCHCLLESTF.

7 WD repeats span residues 57-98 (QSKW…GEVG), 103-143 (GHTR…KPTV), 146-185 (SAVA…TAVE), 189-229 (AHLS…KYLN), 232-276 (PCQV…APVH), 278-318 (FVGH…RVDY), and 319-362 (QMQR…SLSH). Positions 343-373 (PEPEKTPHPQDIDHQPSLSHGEEDAIKEDPP) are disordered. The span at 344-373 (EPEKTPHPQDIDHQPSLSHGEEDAIKEDPP) shows a compositional bias: basic and acidic residues. An RWD domain is found at 393–494 (QEFSLINVQI…RQLVSCLESF (102 aa)). A Phosphoserine modification is found at serine 564. Residues 660 to 706 (KSLGELYILNVNDTQETCQKNATSAMLVGRKDLVQVWSLATVATDLC) form a WD 8 repeat. 3 positions are modified to phosphoserine: serine 839, serine 840, and serine 848. A disordered region spans residues 849 to 870 (LTYSDPRERERDQHDKNKRLLD). Basic and acidic residues predominate over residues 853-869 (DPRERERDQHDKNKRLL). The segment at 919–939 (YCSHCRSEVRGTQCAICKGFT) adopts a C4-type zinc-finger fold. Zn(2+) is bound by residues cysteine 920, cysteine 923, cysteine 932, cysteine 935, cysteine 945, cysteine 956, histidine 961, histidine 964, histidine 967, cysteine 978, cysteine 982, cysteine 984, and cysteine 986. The RING-type; atypical zinc-finger motif lies at 940-989 (FQCAICHVAVRGSSNFCLTCGHGGHTSHMMEWFRTQEVCPTGCGCHCLLE).

The protein belongs to the WD repeat WDR59 family. In terms of assembly, component of the GATOR2 subcomplex, composed of MIOS, SEC13, SEH1L, WDR24 and WDR59. The GATOR2 complex interacts with CASTOR1 and CASTOR2; the interaction is negatively regulated by arginine. The GATOR2 complex interacts with SESN1, SESN2 and SESN3; the interaction is negatively regulated by amino acids. Interacts with DDB1-CUL4A/B E3 ligase complexes.

The protein resides in the lysosome membrane. The GATOR2 complex is negatively regulated by the upstream amino acid sensors CASTOR1 and SESN2, which sequester the GATOR2 complex in absence of amino acids. In the presence of abundant amino acids, GATOR2 is released from CASTOR1 and SESN2 and activated. In terms of biological role, as a component of the GATOR2 complex, functions as an activator of the amino acid-sensing branch of the mTORC1 signaling pathway. The GATOR2 complex indirectly activates mTORC1 through the inhibition of the GATOR1 subcomplex. GATOR2 probably acts as an E3 ubiquitin-protein ligase toward GATOR1. In the presence of abundant amino acids, the GATOR2 complex mediates ubiquitination of the NPRL2 core component of the GATOR1 complex, leading to GATOR1 inactivation. In the absence of amino acids, GATOR2 is inhibited, activating the GATOR1 complex. This Mus musculus (Mouse) protein is GATOR2 complex protein WDR59.